A 613-amino-acid polypeptide reads, in one-letter code: Probable hydrolase clz13 (613 aa).

The N-terminal stretch at 1-25 (MCLLSMRFTVAILLVLLSHCGGSHA) is a signal peptide. 7 N-linked (GlcNAc...) asparagine glycosylation sites follow: N61, N89, N286, N422, N456, N477, and N581.

It belongs to the beta-lactamase family.

The protein operates within secondary metabolite biosynthesis. Its function is as follows. Probable hydrolase; part of the gene cluster that mediates the biosynthesis of squalestatin S1 (SQS1, also known as zaragozic acid A), a heavily oxidized fungal polyketide that offers potent cholesterol lowering activity by targeting squalene synthase (SS). SQS1 is composed of a 2,8-dioxobicyclic[3.2.1]octane-3,4,5-tricarboxyclic acid core that is connected to two lipophilic polyketide arms. These initial steps feature the priming of an unusual benzoic acid starter unit onto the highly reducing polyketide synthase clz14, followed by oxaloacetate extension and product release to generate a tricarboxylic acid containing product. The phenylalanine ammonia lyase (PAL) clz10 and the acyl-CoA ligase clz12 are involved in transforming phenylalanine into benzoyl-CoA. The citrate synthase-like protein clz17 is involved in connecting the C-alpha-carbons of the hexaketide chain and oxaloacetate to afford the tricarboxylic acid unit. The potential hydrolytic enzymes, clz11 and clz13, are in close proximity to pks2 and may participate in product release. On the other side, the tetraketide arm is synthesized by a the squalestatin tetraketide synthase clz2 and enzymatically esterified to the core in the last biosynthetic step, by the acetyltransferase clz6. The biosynthesis of the tetraketide must involve 3 rounds of chain extension. After the first and second rounds methyl-transfer occurs, and in all rounds of extension the ketoreductase and dehydratase are active. The enoyl reductase and C-MeT of clz2 are not active in the final round of extension. The acetyltransferase clz6 appears to have a broad substrate selectivity for its acyl CoA substrate, allowing the in vitro synthesis of novel squalestatins. The biosynthesis of SQS1 requires several oxidative steps likely performed by oxidoreductases clz3, clz15 and clz16. Finally, in support of the identification of the cluster as being responsible for SQS1 production, the cluster contains a gene encoding a putative squalene synthase (SS) clz20, suggesting a likely mechanism for self-resistance. The polypeptide is Probable hydrolase clz13 (Cochliobolus lunatus (Filamentous fungus)).